The chain runs to 392 residues: [Phe13]-bombesin receptor (392 aa).

Residues 1 to 40 (MPEGFQSLNQTLPSAISSIAHLESLNDSFILGAKQSEDVS) are Extracellular-facing. 2 N-linked (GlcNAc...) asparagine glycosylation sites follow: N9 and N26. The chain crosses the membrane as a helical span at residues 41-62 (PGLEILALISVTYAVIISVGIL). The Cytoplasmic portion of the chain corresponds to 63–81 (GNTILIKVFFKIKSMQTVP). A helical membrane pass occupies residues 82–102 (NIFITSLAFGDLLLLLTCVPV). The Extracellular segment spans residues 103–120 (DASRYIVDTWMFGRAGCK). A disulfide bond links C119 and C202. Residues 121 to 142 (IISFIQLTSVGVSVFTLTVLSA) traverse the membrane as a helical segment. The Cytoplasmic segment spans residues 143 to 162 (DRYRAIVKPLQLQTSDAVLK). The chain crosses the membrane as a helical span at residues 163 to 183 (TCGKAVCVWIISMLLAAPEAV). At 184–219 (FSDLYEFGSSEKNTTFEACAPYPVSEKILQETHSLI) the chain is on the extracellular side. Residues 220-240 (CFLVFYIVPLSIISAYYFLIA) traverse the membrane as a helical segment. Topologically, residues 241–271 (KTLYKSTFNMPAEEHTHARKQIESRKRVAKT) are cytoplasmic. The helical transmembrane segment at 272 to 292 (VLVLVALFAVCWLPNHMLYLY) threads the bilayer. The Extracellular segment spans residues 293–312 (RSFTYHSAVNSSAFHLSATI). The chain crosses the membrane as a helical span at residues 313–332 (FARVLAFSNSCVNPFALYWL). Residues 333–392 (SRSFRQHFKKQVYCCKTEPPASQQSPTHSSTITGITAVKGNIQMSEISITLLSAYDVKKE) are Cytoplasmic-facing. C346 is lipidated: S-palmitoyl cysteine.

It belongs to the G-protein coupled receptor 1 family. Expressed only in brain, primarily in cortex and forebrain and at low levels in the midbrain.

The protein localises to the cell membrane. In terms of biological role, the relative rank potency of bombesin-like peptides for this receptor is [Phe13]bombesin &gt; [Leu13]bombesin &gt; GRP &gt; neuromedin-B. The protein is [Phe13]-bombesin receptor (BB4) of Bombina orientalis (Oriental fire-bellied toad).